A 63-amino-acid chain; its full sequence is MNFYNIFVFVALILAITIGQSEAGWLKKIGKKIERVGQHTRDATIQGLGVAQQAPNVAATARG.

The first 19 residues, 1–19 (MNFYNIFVFVALILAITIG), serve as a signal peptide directing secretion. The residue at position 62 (Arg62) is an Arginine amide.

Belongs to the cecropin family.

The protein resides in the secreted. Cecropins have lytic and antibacterial activity against several Gram-positive and Gram-negative bacteria. This Drosophila simulans (Fruit fly) protein is Cecropin-A1 (CecA1).